The following is an 86-amino-acid chain: Chymotrypsin inhibitor (86 aa).

Positions 1–16 (MKTLCIFLVLVVAVAA) are cleaved as a signal peptide. Cystine bridges form between cysteine 26/cysteine 58, cysteine 38/cysteine 50, cysteine 42/cysteine 82, and cysteine 60/cysteine 76. The 57-residue stretch at 26–82 (CPPNKEFGSYGDCPPSCLKNPPNFCTLKLNYGCKCKEGYVLTRYQDYESDCIKPEEC) folds into the TIL domain.

This sequence belongs to the serine protease inhibitor-like (TIL domain-containing) family. Only expressed in fat body.

It is found in the secreted. Its function is as follows. Serine protease inhibitor that inhibits chymotrypsin (IC(50)=34.13 nM, Ki=49.85 nM), microbial serine proteases (subtilisin A (IC(50)=21.31 nM, Ki=20.51 nM) and proteinase K (IC(50)=52.56 nM, Ki=65.42 nM)), as well as human neutrophil elastase (IC(50)=11.54 nM, Ki=8.74 nM), and porcine pancreatic elastase (IC(50)=19.07 nM, Ki=11.32 nM). The polypeptide is Chymotrypsin inhibitor (Araneus ventricosus (Orbweaver spider)).